A 320-amino-acid chain; its full sequence is G-protein coupled receptor homolog FPV021 (320 aa).

Over 1–18 (MDTDYGTVHTQQSVKGNT) the chain is Extracellular. The helical transmembrane segment at 19 to 39 (LILLIYFISFIVGFPGNCTVI) threads the bilayer. Residues 40–52 (WFTGYRWKKSVTT) are Cytoplasmic-facing. Residues 53–73 (IWFLNLAIADTLFVIFIPFEI) form a helical membrane-spanning segment. The Extracellular portion of the chain corresponds to 74–91 (TYILMGHYWPFGLFVCRI). Residues C89 and C167 are joined by a disulfide bond. A helical membrane pass occupies residues 92–112 (GSLMFNTGMYASIFFLTFISI). The Cytoplasmic segment spans residues 113–133 (DRYCLAFRRDICNKYRYRINI). Residues 134–154 (MVMIIISWIISILLSTPYMYF) traverse the membrane as a helical segment. Residues 155-188 (KNTNEKYRNNRDCLEDYHSDNNTYLLRRVVFCIS) lie on the Extracellular side of the membrane. N-linked (GlcNAc...) asparagine; by host glycosylation is present at N175. Residues 189 to 209 (LVMRYLVPSVVMLFCYCLLLF) form a helical membrane-spanning segment. Residues 210–222 (KHSLFLSKGQTYT) are Cytoplasmic-facing. The helical transmembrane segment at 223-243 (IVIMITSFMVLWTPYNILYFI) threads the bilayer. Residues 244 to 260 (DVIGSHYYNADTIIDAA) lie on the Extracellular side of the membrane. A helical transmembrane segment spans residues 261 to 281 (PISISLIFLSSSINPMIYMLV). Residues 282–320 (GRYVSFENYSMRESLKLILSEERDNQTNHENEIKMENIN) are Cytoplasmic-facing.

The protein belongs to the G-protein coupled receptor 1 family.

The protein resides in the host cell membrane. This is G-protein coupled receptor homolog FPV021 from Vertebrata (FPV).